Here is a 1029-residue protein sequence, read N- to C-terminus: Error-prone DNA polymerase (1029 aa).

This sequence belongs to the DNA polymerase type-C family. DnaE2 subfamily.

It is found in the cytoplasm. It catalyses the reaction DNA(n) + a 2'-deoxyribonucleoside 5'-triphosphate = DNA(n+1) + diphosphate. DNA polymerase involved in damage-induced mutagenesis and translesion synthesis (TLS). It is not the major replicative DNA polymerase. The chain is Error-prone DNA polymerase from Saccharophagus degradans (strain 2-40 / ATCC 43961 / DSM 17024).